A 479-amino-acid polypeptide reads, in one-letter code: Sulfate adenylyltransferase subunit 1 (479 aa).

The region spanning 25–239 (KSLLRFLTCG…EVLETVDIQR (215 aa)) is the tr-type G domain. The segment at 34 to 41 (GSVDDGKS) is G1. 34-41 (GSVDDGKS) contributes to the GTP binding site. Positions 92-96 (GITID) are G2. The segment at 113–116 (DTPG) is G3. GTP contacts are provided by residues 113–117 (DTPGH) and 168–171 (NKMD). A G4 region spans residues 168 to 171 (NKMD). Positions 206-208 (SAL) are G5.

Belongs to the TRAFAC class translation factor GTPase superfamily. Classic translation factor GTPase family. CysN/NodQ subfamily. Heterodimer composed of CysD, the smaller subunit, and CysN.

It carries out the reaction sulfate + ATP + H(+) = adenosine 5'-phosphosulfate + diphosphate. Its pathway is sulfur metabolism; hydrogen sulfide biosynthesis; sulfite from sulfate: step 1/3. With CysD forms the ATP sulfurylase (ATPS) that catalyzes the adenylation of sulfate producing adenosine 5'-phosphosulfate (APS) and diphosphate, the first enzymatic step in sulfur assimilation pathway. APS synthesis involves the formation of a high-energy phosphoric-sulfuric acid anhydride bond driven by GTP hydrolysis by CysN coupled to ATP hydrolysis by CysD. The chain is Sulfate adenylyltransferase subunit 1 from Salmonella typhimurium (strain LT2 / SGSC1412 / ATCC 700720).